A 172-amino-acid chain; its full sequence is Cell division protein SepF (172 aa).

A disordered region spans residues R18 to L73. Residues E22–Y40 show a composition bias toward acidic residues. Positions Q48–A59 are enriched in basic and acidic residues. A compositionally biased stretch (basic residues) spans R60–R70.

It belongs to the SepF family. Homodimer. Interacts with FtsZ.

It localises to the cytoplasm. Cell division protein that is part of the divisome complex and is recruited early to the Z-ring. Probably stimulates Z-ring formation, perhaps through the cross-linking of FtsZ protofilaments. Its function overlaps with FtsA. The protein is Cell division protein SepF of Cutibacterium acnes (strain DSM 16379 / KPA171202) (Propionibacterium acnes).